The primary structure comprises 379 residues: Cytochrome b (379 aa).

4 helical membrane-spanning segments follow: residues 34-54, 78-99, 114-134, and 179-199; these read FGSLLGICLITQILTGLLLAM, WLIRNLHANGASFFFICIYFHI, WNTGIILLLTLMATAFVGYVL, and FFALHFLLPFLIAGITLIHLT. Residues His84 and His98 each contribute to the heme b site. Positions 183 and 197 each coordinate heme b. His202 provides a ligand contact to a ubiquinone. 4 helical membrane passes run 227–247, 289–309, 321–341, and 348–368; these read LKDILGFTLMLIPLLTLTFFS, LGGVLALAASVLILFLTPLLH, FSQVLFWLLVANLLILTWVGS, and FIAIGQMASFTYFLILLVLFP.

The protein belongs to the cytochrome b family. As to quaternary structure, the cytochrome bc1 complex contains 11 subunits: 3 respiratory subunits (MT-CYB, CYC1 and UQCRFS1), 2 core proteins (UQCRC1 and UQCRC2) and 6 low-molecular weight proteins (UQCRH/QCR6, UQCRB/QCR7, UQCRQ/QCR8, UQCR10/QCR9, UQCR11/QCR10 and a cleavage product of UQCRFS1). This cytochrome bc1 complex then forms a dimer. It depends on heme b as a cofactor.

It localises to the mitochondrion inner membrane. Functionally, component of the ubiquinol-cytochrome c reductase complex (complex III or cytochrome b-c1 complex) that is part of the mitochondrial respiratory chain. The b-c1 complex mediates electron transfer from ubiquinol to cytochrome c. Contributes to the generation of a proton gradient across the mitochondrial membrane that is then used for ATP synthesis. This Apteryx australis (Southern brown kiwi) protein is Cytochrome b (MT-CYB).